The primary structure comprises 258 residues: Protein STAY-GREEN LIKE, chloroplastic (258 aa).

The protein belongs to the staygreen family. Strongly expressed in leaves, stems and panicles, and at lower levels in roots and seeds.

Functionally, promotes chlorophyll degradation in leaves. May be involved in LHCI proteins degradation, regulating the balance between LHCI and LHCII. This is Protein STAY-GREEN LIKE, chloroplastic from Oryza sativa subsp. japonica (Rice).